The following is a 350-amino-acid chain: UDP-3-O-acylglucosamine N-acyltransferase (350 aa).

Catalysis depends on histidine 244, which acts as the Proton acceptor.

This sequence belongs to the transferase hexapeptide repeat family. LpxD subfamily. Homotrimer.

The enzyme catalyses a UDP-3-O-[(3R)-3-hydroxyacyl]-alpha-D-glucosamine + a (3R)-hydroxyacyl-[ACP] = a UDP-2-N,3-O-bis[(3R)-3-hydroxyacyl]-alpha-D-glucosamine + holo-[ACP] + H(+). Its pathway is bacterial outer membrane biogenesis; LPS lipid A biosynthesis. Functionally, catalyzes the N-acylation of UDP-3-O-acylglucosamine using 3-hydroxyacyl-ACP as the acyl donor. Is involved in the biosynthesis of lipid A, a phosphorylated glycolipid that anchors the lipopolysaccharide to the outer membrane of the cell. This Herminiimonas arsenicoxydans protein is UDP-3-O-acylglucosamine N-acyltransferase.